The primary structure comprises 964 residues: Protein HIRA (964 aa).

WD repeat units follow at residues 10 to 50, 64 to 103, 123 to 162, 165 to 204, 259 to 331, and 335 to 376; these read RHEG…KDNT, DHFG…GTSE, GHTA…CTAV, GHTS…LAHK, GHNA…PLFV, and FFSQ…HRLS. A disordered region spans residues 453 to 490; it reads SHEDSKKTAGPTADDVKKGNQLSSPVKQREYRRPDGRK. The segment covering 479-490 has biased composition (basic and acidic residues); the sequence is KQREYRRPDGRK. A WD 7 repeat occupies 644-685; it reads LWSDRISGKVTVLAGNANFWAVGCEDGFLQVYTRCGVRAMPA. A coiled-coil region spans residues 920–940; that stretch reads ASNRKVQRLLNEFMDLLLEYE.

This sequence belongs to the WD repeat HIR1 family. Interacts with RS2. As to expression, more abundant in apices and young leaf primordia than in fully expanded leaf tissues.

It is found in the nucleus. Histone chaperone involved in maintining knox genes silencing throughout leaf development. The chain is Protein HIRA from Zea mays (Maize).